The sequence spans 444 residues: UDP-N-acetylglucosamine 1-carboxyvinyltransferase (444 aa).

Residue 22-23 (KN) coordinates phosphoenolpyruvate. Arginine 94 contacts UDP-N-acetyl-alpha-D-glucosamine. Aspartate 119 functions as the Proton donor in the catalytic mechanism. Residues aspartate 309 and valine 331 each coordinate UDP-N-acetyl-alpha-D-glucosamine.

The protein belongs to the EPSP synthase family. MurA subfamily.

The protein localises to the cytoplasm. The enzyme catalyses phosphoenolpyruvate + UDP-N-acetyl-alpha-D-glucosamine = UDP-N-acetyl-3-O-(1-carboxyvinyl)-alpha-D-glucosamine + phosphate. It participates in cell wall biogenesis; peptidoglycan biosynthesis. Functionally, cell wall formation. Adds enolpyruvyl to UDP-N-acetylglucosamine. The sequence is that of UDP-N-acetylglucosamine 1-carboxyvinyltransferase from Chlamydia trachomatis serovar D (strain ATCC VR-885 / DSM 19411 / UW-3/Cx).